Reading from the N-terminus, the 257-residue chain is Receptor expression-enhancing protein 4 (257 aa).

Helical transmembrane passes span 1–21 (MVSW…CPAY) and 42–62 (WIVF…ISWF). 2 positions are modified to phosphoserine: S152 and S194. Residues 183–257 (PIGYRAGGLQ…KKTVPSDVDS (75 aa)) form a disordered region. Phosphothreonine is present on T196. S202 is subject to Phosphoserine. T250 is modified (phosphothreonine). A Phosphoserine modification is found at S253.

The protein belongs to the DP1 family. Expressed in circumvallate papillae and testis.

Its subcellular location is the endoplasmic reticulum membrane. Functionally, microtubule-binding protein required to ensure proper cell division and nuclear envelope reassembly by sequestering the endoplasmic reticulum away from chromosomes during mitosis. Probably acts by clearing the endoplasmic reticulum membrane from metaphase chromosomes. The protein is Receptor expression-enhancing protein 4 (REEP4) of Homo sapiens (Human).